We begin with the raw amino-acid sequence, 306 residues long: Protein YIPF1 (306 aa).

Residues 1–119 lie on the Cytoplasmic side of the membrane; sequence MAAVDDLQFE…VRLYIRSNPD (119 aa). The tract at residues 30–63 is disordered; that stretch reads IEDPSVSFGHQPRPPGSVGREEDEELLGNNDSDE. Residues 50–63 show a composition bias toward acidic residues; that stretch reads EEDEELLGNNDSDE. A helical membrane pass occupies residues 120-140; the sequence is LYGPFWICATLVFAIAISGNL. Over 141–162 the chain is Lumenal; sequence SNFLIHLGEKTYHYVPEFQKVS. A helical transmembrane segment spans residues 163-183; sequence IAATVIYAYAWLVPLALWGFL. Residues 184–200 are Cytoplasmic-facing; sequence LWRNSKVMSMVSYSFLE. A helical membrane pass occupies residues 201 to 221; sequence IVCVYGYSLFIYIPTAVLWII. The Lumenal segment spans residues 222 to 227; that stretch reads PQRVVR. The chain crosses the membrane as a helical span at residues 228-248; sequence WVLVMIALGVSGSVLVMTFWP. Over 249–256 the chain is Cytoplasmic; it reads AVREDNRR. A helical transmembrane segment spans residues 257–277; the sequence is VALATIVTIVLLHVLLSVGCL. The Lumenal segment spans residues 278–306; that stretch reads AYFFDAPEMDHLPAAITTPNQTVTAAKSS. Residue asparagine 297 is glycosylated (N-linked (GlcNAc...) asparagine).

It belongs to the YIP1 family. Interacts with YIPF6; this interaction may stabilize YIPF1. May also form a ternary complex with YIPF2 and YIPF6.

Its subcellular location is the golgi apparatus. It localises to the cis-Golgi network membrane. It is found in the trans-Golgi network membrane. The protein localises to the late endosome membrane. This chain is Protein YIPF1 (Yipf1), found in Mus musculus (Mouse).